Here is a 315-residue protein sequence, read N- to C-terminus: GTPase Era (315 aa).

Residues 21–190 (RSGFVAIVGR…QSALEARLDP (170 aa)) form the Era-type G domain. The interval 29–36 (GRPNVGKS) is G1. 29–36 (GRPNVGKS) contacts GTP. Residues 55–59 (QTTRN) form a G2 region. Residues 76-79 (DTPG) are G3. Residues 76–80 (DTPGI) and 138–141 (NKQD) each bind GTP. The interval 138–141 (NKQD) is G4. Residues 169–171 (FSA) form a G5 region. Residues 221–297 (TRQEVPHSVA…YLKLFVKVEP (77 aa)) form the KH type-2 domain.

The protein belongs to the TRAFAC class TrmE-Era-EngA-EngB-Septin-like GTPase superfamily. Era GTPase family. In terms of assembly, monomer.

Its subcellular location is the cytoplasm. The protein localises to the cell inner membrane. In terms of biological role, an essential GTPase that binds both GDP and GTP, with rapid nucleotide exchange. Plays a role in 16S rRNA processing and 30S ribosomal subunit biogenesis and possibly also in cell cycle regulation and energy metabolism. This Synechocystis sp. (strain ATCC 27184 / PCC 6803 / Kazusa) protein is GTPase Era.